The primary structure comprises 190 residues: MSKRILAAVVTVLSLTAFSPAFAATTSTHVLLTTSAGNIELALDDQKAPVSVKNFVDYVNSGFYNGTIFHRVIPGFMVQGGGFSSDMKQKATNPPVKNEADNGLRNLRGTISMARTSEKDSATSQFFINVADNAFLDHGQRDFGYAVFGKVVKGMEVADKISQVQTENVGPYQNVPSKPIVIQSAKIIKK.

Residues 1–23 form the signal peptide; it reads MSKRILAAVVTVLSLTAFSPAFA. The 162-residue stretch at 26–187 folds into the PPIase cyclophilin-type domain; it reads TSTHVLLTTS…KPIVIQSAKI (162 aa).

The protein belongs to the cyclophilin-type PPIase family.

It is found in the periplasm. It carries out the reaction [protein]-peptidylproline (omega=180) = [protein]-peptidylproline (omega=0). In terms of biological role, PPIases accelerate the folding of proteins. It catalyzes the cis-trans isomerization of proline imidic peptide bonds in oligopeptides. The protein is Peptidyl-prolyl cis-trans isomerase A (rotA) of Dickeya dadantii (strain 3937) (Erwinia chrysanthemi (strain 3937)).